Here is a 161-residue protein sequence, read N- to C-terminus: MORN repeat-containing protein 5 (161 aa).

MORN repeat units lie at residues 8–30, 31–53, and 54–75; these read YIGEYVDGRMEGKAKYILPTETI, YVGEMKDGMFHGEGTLYFPSGSQ, and YDAIWENGLAIKGTYTFSDGLH.

As to expression, expressed in sperm (at protein level).

It is found in the cell projection. The protein localises to the cilium. The protein resides in the flagellum. The protein is MORN repeat-containing protein 5 (MORN5) of Homo sapiens (Human).